Here is a 367-residue protein sequence, read N- to C-terminus: UDP-N-acetylglucosamine--N-acetylmuramyl-(pentapeptide) pyrophosphoryl-undecaprenol N-acetylglucosamine transferase (367 aa).

UDP-N-acetyl-alpha-D-glucosamine contacts are provided by residues 15–17 (TGG), asparagine 126, arginine 169, serine 197, and glutamine 298.

The protein belongs to the glycosyltransferase 28 family. MurG subfamily.

Its subcellular location is the cell inner membrane. It carries out the reaction di-trans,octa-cis-undecaprenyl diphospho-N-acetyl-alpha-D-muramoyl-L-alanyl-D-glutamyl-meso-2,6-diaminopimeloyl-D-alanyl-D-alanine + UDP-N-acetyl-alpha-D-glucosamine = di-trans,octa-cis-undecaprenyl diphospho-[N-acetyl-alpha-D-glucosaminyl-(1-&gt;4)]-N-acetyl-alpha-D-muramoyl-L-alanyl-D-glutamyl-meso-2,6-diaminopimeloyl-D-alanyl-D-alanine + UDP + H(+). Its pathway is cell wall biogenesis; peptidoglycan biosynthesis. Functionally, cell wall formation. Catalyzes the transfer of a GlcNAc subunit on undecaprenyl-pyrophosphoryl-MurNAc-pentapeptide (lipid intermediate I) to form undecaprenyl-pyrophosphoryl-MurNAc-(pentapeptide)GlcNAc (lipid intermediate II). The chain is UDP-N-acetylglucosamine--N-acetylmuramyl-(pentapeptide) pyrophosphoryl-undecaprenol N-acetylglucosamine transferase from Bradyrhizobium sp. (strain ORS 278).